The sequence spans 395 residues: ATP phosphoribosyltransferase regulatory subunit (395 aa).

It belongs to the class-II aminoacyl-tRNA synthetase family. HisZ subfamily. As to quaternary structure, heteromultimer composed of HisG and HisZ subunits.

It is found in the cytoplasm. The protein operates within amino-acid biosynthesis; L-histidine biosynthesis; L-histidine from 5-phospho-alpha-D-ribose 1-diphosphate: step 1/9. In terms of biological role, required for the first step of histidine biosynthesis. May allow the feedback regulation of ATP phosphoribosyltransferase activity by histidine. In Pseudomonas entomophila (strain L48), this protein is ATP phosphoribosyltransferase regulatory subunit.